The sequence spans 523 residues: Calcium-dependent protein kinase 28 (523 aa).

The N-myristoyl glycine moiety is linked to residue glycine 2. Residue cysteine 4 is the site of S-palmitoyl cysteine attachment. The interval serine 15–serine 43 is disordered. The Protein kinase domain maps to tyrosine 62–valine 322. ATP-binding positions include leucine 68–threonine 76 and lysine 91. Aspartate 188 (proton acceptor) is an active-site residue. Phosphoserine occurs at positions 228 and 318. The tract at residues alanine 328–leucine 358 is autoinhibitory domain. 4 consecutive EF-hand domains span residues alanine 365 to tryptophan 400, leucine 402 to leucine 437, lysine 444 to isoleucine 479, and leucine 482 to serine 509. Residues aspartate 378, aspartate 380, asparagine 382, glutamate 389, aspartate 415, asparagine 417, aspartate 419, glutamate 426, aspartate 457, aspartate 459, aspartate 461, tyrosine 463, glutamate 468, aspartate 487, aspartate 489, aspartate 491, and lysine 493 each coordinate Ca(2+). Serine 495 bears the Phosphoserine mark. Ca(2+) is bound at residue glutamate 498. Phosphoserine is present on serine 515.

The protein belongs to the protein kinase superfamily. Ser/Thr protein kinase family. CDPK subfamily. As to quaternary structure, interacts with BIK1. Expressed in vascular and meristematic tissues throughout plant development.

The protein localises to the cell membrane. It catalyses the reaction L-seryl-[protein] + ATP = O-phospho-L-seryl-[protein] + ADP + H(+). The enzyme catalyses L-threonyl-[protein] + ATP = O-phospho-L-threonyl-[protein] + ADP + H(+). With respect to regulation, activated by calcium. Autophosphorylation plays an important role in the regulation of the kinase activity. Its function is as follows. May play a role in signal transduction pathways that involve calcium as a second messenger. Acts as a developmentally controlled regulator for coordinated stem elongation and vascular development. Acts as a key component which contributes to the developmental switch that establishes the transition from vegetative to reproductive growth. Involved in pathogen-associated molecular pattern (PAMP)-triggered immunity (PTI) signaling. Interacts with and phosphorylates the kinase BIK1, a central rate-limiting kinase in PTI signaling. Facilitates BIK1 turnover and negatively regulates BIK1-mediated immune responses triggered by several PAMPs. Its kinase activity is necessary and sufficient for its function in PTI signaling. This Arabidopsis thaliana (Mouse-ear cress) protein is Calcium-dependent protein kinase 28.